The primary structure comprises 401 residues: Probable tRNA sulfurtransferase (401 aa).

Residues 60–165 form the THUMP domain; the sequence is EALFPHLKQV…EEATFLTIRD (106 aa). Residues 183-184, 208-209, arginine 265, glycine 287, and glutamine 296 contribute to the ATP site; these read ML and HF.

This sequence belongs to the ThiI family.

The protein localises to the cytoplasm. It carries out the reaction [ThiI sulfur-carrier protein]-S-sulfanyl-L-cysteine + a uridine in tRNA + 2 reduced [2Fe-2S]-[ferredoxin] + ATP + H(+) = [ThiI sulfur-carrier protein]-L-cysteine + a 4-thiouridine in tRNA + 2 oxidized [2Fe-2S]-[ferredoxin] + AMP + diphosphate. The enzyme catalyses [ThiS sulfur-carrier protein]-C-terminal Gly-Gly-AMP + S-sulfanyl-L-cysteinyl-[cysteine desulfurase] + AH2 = [ThiS sulfur-carrier protein]-C-terminal-Gly-aminoethanethioate + L-cysteinyl-[cysteine desulfurase] + A + AMP + 2 H(+). It participates in cofactor biosynthesis; thiamine diphosphate biosynthesis. Its function is as follows. Catalyzes the ATP-dependent transfer of a sulfur to tRNA to produce 4-thiouridine in position 8 of tRNAs, which functions as a near-UV photosensor. Also catalyzes the transfer of sulfur to the sulfur carrier protein ThiS, forming ThiS-thiocarboxylate. This is a step in the synthesis of thiazole, in the thiamine biosynthesis pathway. The sulfur is donated as persulfide by IscS. This Bacillus subtilis (strain 168) protein is Probable tRNA sulfurtransferase.